A 171-amino-acid polypeptide reads, in one-letter code: Adenine phosphoribosyltransferase (171 aa).

It belongs to the purine/pyrimidine phosphoribosyltransferase family. As to quaternary structure, homodimer.

It localises to the cytoplasm. The catalysed reaction is AMP + diphosphate = 5-phospho-alpha-D-ribose 1-diphosphate + adenine. It functions in the pathway purine metabolism; AMP biosynthesis via salvage pathway; AMP from adenine: step 1/1. In terms of biological role, catalyzes a salvage reaction resulting in the formation of AMP, that is energically less costly than de novo synthesis. The protein is Adenine phosphoribosyltransferase of Ruminiclostridium cellulolyticum (strain ATCC 35319 / DSM 5812 / JCM 6584 / H10) (Clostridium cellulolyticum).